Here is a 91-residue protein sequence, read N- to C-terminus: Uteroglobin (91 aa).

An N-terminal signal peptide occupies residues 1 to 21; sequence MKLAITITLAILALCCSPASA.

This sequence belongs to the secretoglobin family. Antiparallel homodimer; disulfide-linked. Interaction with LMBR1L is controversial. In terms of tissue distribution, club cells (nonciliated cells of the surface epithelium of the pulmonary airways). Expressed in lung, uterus, and prostate.

It localises to the secreted. In terms of biological role, binds phosphatidylcholine, phosphatidylinositol, polychlorinated biphenyls (PCB) and weakly progesterone, potent inhibitor of phospholipase A2. This Equus caballus (Horse) protein is Uteroglobin (SCGB1A1).